The chain runs to 468 residues: Pancreatic lipase-related protein 2 (468 aa).

The N-terminal stretch at 1–16 (MLLCWIVSLLLATVGG) is a signal peptide. Cys-20 and Cys-26 are joined by a disulfide. Residues 92–104 (VHGFIDKGEDGWL) form a required for galactolipase activity region. A disulfide bridge links Cys-108 with Cys-119. The active-site Nucleophile is the Ser-170. Catalysis depends on Asp-194, which acts as the Charge relay system. 4 residues coordinate Ca(2+): Glu-205, Arg-208, Asp-210, and Asp-213. A disulfide bridge connects residues Cys-255 and Cys-279. The tract at residues 256–278 (QKNILSTIVDINGIWEGTQNFVA) is required for galactolipase activity. Residue His-281 is the Charge relay system of the active site. Intrachain disulfides connect Cys-303/Cys-314 and Cys-317/Cys-322. Residues Asn-352 and Asn-427 are each glycosylated (N-linked (GlcNAc...) asparagine). Positions 356-468 (WRYKVSVTLS…EDVLQSLYPC (113 aa)) constitute a PLAT domain. The cysteines at positions 452 and 468 are disulfide-linked.

This sequence belongs to the AB hydrolase superfamily. Lipase family. As to expression, expressed in pancreatic acinar cells (at protein level).

It is found in the secreted. The protein localises to the zymogen granule membrane. It localises to the cell projection. The protein resides in the neuron projection. It catalyses the reaction a triacylglycerol + H2O = a diacylglycerol + a fatty acid + H(+). The enzyme catalyses a 1,2-diacyl-3-O-(beta-D-galactosyl)-sn-glycerol + 2 H2O = 3-beta-D-galactosyl-sn-glycerol + 2 a fatty acid + 2 H(+). The catalysed reaction is 1,2,3-tri-(9Z-octadecenoyl)-glycerol + H2O = di-(9Z)-octadecenoylglycerol + (9Z)-octadecenoate + H(+). It carries out the reaction di-(9Z)-octadecenoylglycerol + H2O = (9Z-octadecenoyl)-glycerol + (9Z)-octadecenoate + H(+). It catalyses the reaction (9Z-octadecenoyl)-glycerol + H2O = glycerol + (9Z)-octadecenoate + H(+). The enzyme catalyses 1-(9Z-octadecenoyl)-glycerol + H2O = glycerol + (9Z)-octadecenoate + H(+). The catalysed reaction is 1,2,3-tripropanoylglycerol + H2O = dipropanoylglycerol + propanoate + H(+). It carries out the reaction 1,2,3-tributanoylglycerol + H2O = dibutanoylglycerol + butanoate + H(+). It catalyses the reaction 1,2,3-trioctanoylglycerol + H2O = dioctanoylglycerol + octanoate + H(+). The enzyme catalyses 1,2-didecanoylglycerol + H2O = decanoylglycerol + decanoate + H(+). The catalysed reaction is long chain 1,2-diacyl-3-O-beta-D-galactosyl-sn-glycerol + H2O = long chain acyl-3-O-beta-D-galactosyl-sn-glycerol + a fatty acid + H(+). It carries out the reaction 1,2-dioctanoyl-3-O-beta-D-galactosyl-sn-glycerol + H2O = octanoyl-3-(beta-D-galactosyl)-sn-glycerol + octanoate + H(+). It catalyses the reaction 1,2-didodecanoyl-3-beta-D-galactosyl-sn-glycerol + H2O = dodecanoyl-3-beta-D-galactosyl-sn-glycerol + dodecanoate + H(+). The enzyme catalyses 1-beta-D-galactosyl-2,3-didodecanoyl-sn-glycerol + H2O = 1-beta-D-galactosyl-dodecanoyl-sn-glycerol + dodecanoate + H(+). The catalysed reaction is a 1,2-diacyl-3-O-[alpha-D-galactosyl-(1-&gt;6)-beta-D-galactosyl]-sn-glycerol + H2O = acyl-3-O-[alpha-D-galactosyl-(1-&gt;6)-beta-D-galactosyl]-sn-glycerol + a fatty acid + H(+). It carries out the reaction long chain 1,2-diacyl-3-O-[alpha-D-galactosyl-(1-&gt;6)-beta-D-galactosyl]-sn-glycerol + H2O = long chain acyl-3-O-[alpha-D-galactosyl-(1-&gt;6)-beta-D-galactosyl]-sn-glycerol + a fatty acid + H(+). It catalyses the reaction 1,2-dioctanoyl-3-O-[alpha-D-galactosyl-(1-&gt;6)-beta-D-galactosyl]-sn-glycerol + H2O = octanoyl-3-O-[alpha-D-galactosyl-(1-&gt;6)-beta-D-galactosyl]-sn-glycerol + octanoate + H(+). The enzyme catalyses 1,2-didodecanoyl-3-O-[alpha-D-galactosyl-(1-&gt;6)-beta-D-galactosyl]-sn-glycerol + H2O = dodecanoyl-3-O-[alpha-D-galactosyl-(1-&gt;6)-beta-D-galactosyl]-sn-glycerol + dodecanoate + H(+). The catalysed reaction is a 1,2-diacyl-sn-glycero-3-phosphocholine + H2O = a monoacyl-sn-glycero-3-phosphocholine + a fatty acid + H(+). It participates in glycerolipid metabolism; triacylglycerol degradation. The protein operates within glycolipid metabolism. CLPS stimulates triacylglycerol lipase activity. Triacylglycerol lipase activity is not inhibited by increasing bile salt concentration. Functionally, lipase that primarily hydrolyzes triglycerides and galactosylglycerides. In neonates, may play a major role in pancreatic digestion of dietary fats such as milk fat globules enriched in long-chain triglycerides. Hydrolyzes short-, medium- and long-chain fatty acyls in triglycerides without apparent positional specificity. Can completely deacylate triacylglycerols. When the liver matures and bile salt synthesis increases, likely functions mainly as a galactolipase and monoacylglycerol lipase. Hydrolyzes monogalactosyldiglycerols (MGDG) and digalactosyldiacylglycerols (DGDG) present in a plant-based diet, releasing long-chain polyunsaturated fatty acids. Hydrolyzes medium- and long-chain fatty acyls in galactolipids. May act together with LIPF to hydrolyze partially digested triglycerides. Hydrolyzes long-chain monoglycerides with high efficiency. In cytotoxic T cells, contributes to perforin-dependent cell lysis, but is unlikely to mediate direct cytotoxicity. Also has low phospholipase activity. In neurons, required for the localization of the phospholipid 1-oleoyl-2-palmitoyl-PC (OPPC) to neurite tips through acyl chain remodeling of membrane phospholipids. The resulting OPPC-rich lipid membrane domain recruits the t-SNARE protein STX4 by selectively interacting with the STX4 transmembrane domain and this promotes surface expression of the dopamine transporter SLC6A3/DAT at neurite tips by facilitating fusion of SLC6A3-containing transport vesicles with the plasma membrane. This is Pancreatic lipase-related protein 2 from Rattus norvegicus (Rat).